A 542-amino-acid polypeptide reads, in one-letter code: Peptide chain release factor 3 (542 aa).

Residues 11 to 279 (EKRRTFAIIS…AYVEYAPSPR (269 aa)) form the tr-type G domain. Residues 20–27 (SHPDAGKT), 88–92 (DTPGH), and 142–145 (NKLD) each bind GTP.

The protein belongs to the TRAFAC class translation factor GTPase superfamily. Classic translation factor GTPase family. PrfC subfamily.

The protein localises to the cytoplasm. In terms of biological role, increases the formation of ribosomal termination complexes and stimulates activities of RF-1 and RF-2. It binds guanine nucleotides and has strong preference for UGA stop codons. It may interact directly with the ribosome. The stimulation of RF-1 and RF-2 is significantly reduced by GTP and GDP, but not by GMP. This is Peptide chain release factor 3 from Nitrosococcus oceani (strain ATCC 19707 / BCRC 17464 / JCM 30415 / NCIMB 11848 / C-107).